Here is a 218-residue protein sequence, read N- to C-terminus: Probable transaldolase (218 aa).

Residue lysine 84 is the Schiff-base intermediate with substrate of the active site.

The protein belongs to the transaldolase family. Type 3B subfamily.

Its subcellular location is the cytoplasm. It carries out the reaction D-sedoheptulose 7-phosphate + D-glyceraldehyde 3-phosphate = D-erythrose 4-phosphate + beta-D-fructose 6-phosphate. Its pathway is carbohydrate degradation; pentose phosphate pathway; D-glyceraldehyde 3-phosphate and beta-D-fructose 6-phosphate from D-ribose 5-phosphate and D-xylulose 5-phosphate (non-oxidative stage): step 2/3. Functionally, transaldolase is important for the balance of metabolites in the pentose-phosphate pathway. This Sulfurihydrogenibium sp. (strain YO3AOP1) protein is Probable transaldolase.